The primary structure comprises 220 residues: Glycerol-3-phosphate acyltransferase (220 aa).

A run of 5 helical transmembrane segments spans residues 4-24, 53-73, 80-100, 116-136, and 138-158; these read LTIL…AVLV, VAAL…VYLA, PVYL…PIFF, MPIG…VLLV, and GYSS…TYLI. Positions 193 to 220 are disordered; that stretch reads WGRQAQRRQEEVGEMDDVAQKRDERDKK. Residues 210 to 220 show a composition bias toward basic and acidic residues; the sequence is VAQKRDERDKK.

The protein belongs to the PlsY family. As to quaternary structure, probably interacts with PlsX.

The protein localises to the cell inner membrane. The catalysed reaction is an acyl phosphate + sn-glycerol 3-phosphate = a 1-acyl-sn-glycero-3-phosphate + phosphate. The protein operates within lipid metabolism; phospholipid metabolism. In terms of biological role, catalyzes the transfer of an acyl group from acyl-phosphate (acyl-PO(4)) to glycerol-3-phosphate (G3P) to form lysophosphatidic acid (LPA). This enzyme utilizes acyl-phosphate as fatty acyl donor, but not acyl-CoA or acyl-ACP. This is Glycerol-3-phosphate acyltransferase from Aeromonas salmonicida (strain A449).